Here is a 356-residue protein sequence, read N- to C-terminus: Protein-glutamate methylesterase/protein-glutamine glutaminase 4 (356 aa).

Positions 15-132 (RVLVVDDSAV…SVGEMTADLV (118 aa)) constitute a Response regulatory domain. A 4-aspartylphosphate modification is found at aspartate 66. The CheB-type methylesterase domain maps to 162 to 348 (ARTTLQVVAI…PLDRIAPEIL (187 aa)). Residues serine 174, histidine 200, and aspartate 296 contribute to the active site.

The protein belongs to the CheB family. In terms of processing, phosphorylated by CheA. Phosphorylation of the N-terminal regulatory domain activates the methylesterase activity.

The protein resides in the cytoplasm. The catalysed reaction is [protein]-L-glutamate 5-O-methyl ester + H2O = L-glutamyl-[protein] + methanol + H(+). The enzyme catalyses L-glutaminyl-[protein] + H2O = L-glutamyl-[protein] + NH4(+). Its function is as follows. Involved in chemotaxis. Part of a chemotaxis signal transduction system that modulates chemotaxis in response to various stimuli. Catalyzes the demethylation of specific methylglutamate residues introduced into the chemoreceptors (methyl-accepting chemotaxis proteins or MCP) by CheR. Also mediates the irreversible deamidation of specific glutamine residues to glutamic acid. This chain is Protein-glutamate methylesterase/protein-glutamine glutaminase 4, found in Anaeromyxobacter dehalogenans (strain 2CP-C).